Here is a 315-residue protein sequence, read N- to C-terminus: Methionyl-tRNA formyltransferase (315 aa).

113–116 (SLLP) provides a ligand contact to (6S)-5,6,7,8-tetrahydrofolate.

Belongs to the Fmt family.

The enzyme catalyses L-methionyl-tRNA(fMet) + (6R)-10-formyltetrahydrofolate = N-formyl-L-methionyl-tRNA(fMet) + (6S)-5,6,7,8-tetrahydrofolate + H(+). Attaches a formyl group to the free amino group of methionyl-tRNA(fMet). The formyl group appears to play a dual role in the initiator identity of N-formylmethionyl-tRNA by promoting its recognition by IF2 and preventing the misappropriation of this tRNA by the elongation apparatus. This is Methionyl-tRNA formyltransferase from Pectobacterium carotovorum subsp. carotovorum (strain PC1).